The sequence spans 1070 residues: Carbamoyl phosphate synthase large chain (1070 aa).

A carboxyphosphate synthetic domain region spans residues 1-399 (MPKREDIKKV…SLLKAFKSLD (399 aa)). Residues Arg-129, Arg-169, Gly-175, Gly-176, Glu-208, Val-210, Glu-215, Gly-241, Val-242, His-243, Gln-284, and Glu-296 each contribute to the ATP site. In terms of domain architecture, ATP-grasp 1 spans 133–325 (KETMLRIGEK…IARVTAKIAI (193 aa)). 3 residues coordinate Mg(2+): Gln-284, Glu-296, and Asn-298. Gln-284, Glu-296, and Asn-298 together coordinate Mn(2+). Residues 400 to 540 (IDSQLGNKRW…YSTYEDTCET (141 aa)) form an oligomerization domain region. The tract at residues 541-931 (NPTDRKKILI…YKAELAADNL (391 aa)) is carbamoyl phosphate synthetic domain. One can recognise an ATP-grasp 2 domain in the interval 672–863 (YVLMQKFGIL…LAKIAARVIA (192 aa)). Residues Arg-708, Asp-747, Leu-749, Glu-754, Gly-779, Val-780, His-781, Ser-782, Gln-822, and Glu-834 each contribute to the ATP site. Mg(2+)-binding residues include Gln-822, Glu-834, and Asn-836. Mn(2+)-binding residues include Gln-822, Glu-834, and Asn-836. The MGS-like domain occupies 930 to 1070 (NLLPLTGKVF…INEYHKEMGL (141 aa)). An allosteric domain region spans residues 932 to 1070 (LPLTGKVFLS…INEYHKEMGL (139 aa)).

Belongs to the CarB family. As to quaternary structure, composed of two chains; the small (or glutamine) chain promotes the hydrolysis of glutamine to ammonia, which is used by the large (or ammonia) chain to synthesize carbamoyl phosphate. Tetramer of heterodimers (alpha,beta)4. Mg(2+) is required as a cofactor. Requires Mn(2+) as cofactor.

It catalyses the reaction hydrogencarbonate + L-glutamine + 2 ATP + H2O = carbamoyl phosphate + L-glutamate + 2 ADP + phosphate + 2 H(+). It carries out the reaction hydrogencarbonate + NH4(+) + 2 ATP = carbamoyl phosphate + 2 ADP + phosphate + 2 H(+). It functions in the pathway amino-acid biosynthesis; L-arginine biosynthesis; carbamoyl phosphate from bicarbonate: step 1/1. Its pathway is pyrimidine metabolism; UMP biosynthesis via de novo pathway; (S)-dihydroorotate from bicarbonate: step 1/3. Functionally, large subunit of the glutamine-dependent carbamoyl phosphate synthetase (CPSase). CPSase catalyzes the formation of carbamoyl phosphate from the ammonia moiety of glutamine, carbonate, and phosphate donated by ATP, constituting the first step of 2 biosynthetic pathways, one leading to arginine and/or urea and the other to pyrimidine nucleotides. The large subunit (synthetase) binds the substrates ammonia (free or transferred from glutamine from the small subunit), hydrogencarbonate and ATP and carries out an ATP-coupled ligase reaction, activating hydrogencarbonate by forming carboxy phosphate which reacts with ammonia to form carbamoyl phosphate. In Methanosarcina acetivorans (strain ATCC 35395 / DSM 2834 / JCM 12185 / C2A), this protein is Carbamoyl phosphate synthase large chain.